The chain runs to 253 residues: Ice-binding protein (253 aa).

Residues 1 to 27 (MKTLISNSKKVLIPLIMGSIFAGNVMA) form the signal peptide. Cys-75 and Cys-93 form a disulfide bridge. 2 consecutive short sequence motifs (ice-binding site motif (T-A/G-X-T/N)) follow at residues 220–223 (TGTT) and 232–235 (TAVT).

The protein belongs to the ice-binding protein family.

The protein resides in the secreted. In terms of biological role, binds to the surface of ice crystals and inhibits their growth. Has ice recrystallization inhibition (RI) activity (the ability to prevent the formation of larger grains of ice at the expense of smaller grains), which may protect membranes from freezing injury. Has high thermal hysteresis (TH) activity, which is the ability to lower the freezing point of an aqueous solution below its melting point, and thus the freezing of the cell fluid can be prevented protecting the organism from ice damage. The TH activity of this protein is 3.8 degrees Celsius at 14 mM. The chain is Ice-binding protein from Colwellia sp.